The primary structure comprises 251 residues: Flap endonuclease Xni (251 aa).

Aspartate 104 serves as a coordination point for Mg(2+). The 90-residue stretch at 160-249 folds into the 5'-3' exonuclease domain; that stretch reads VQPQQLPDYW…IDGNLQQLRL (90 aa). K(+) contacts are provided by leucine 171, alanine 172, proline 180, valine 182, and isoleucine 185. Positions 184-189 are interaction with DNA; sequence GIGPKS.

The protein belongs to the Xni family. Mg(2+) serves as cofactor. The cofactor is K(+).

Functionally, has flap endonuclease activity. During DNA replication, flap endonucleases cleave the 5'-overhanging flap structure that is generated by displacement synthesis when DNA polymerase encounters the 5'-end of a downstream Okazaki fragment. In Escherichia coli O81 (strain ED1a), this protein is Flap endonuclease Xni.